We begin with the raw amino-acid sequence, 221 residues long: ATP phosphoribosyltransferase (221 aa).

This sequence belongs to the ATP phosphoribosyltransferase family. Short subfamily. As to quaternary structure, heteromultimer composed of HisG and HisZ subunits.

The protein resides in the cytoplasm. The catalysed reaction is 1-(5-phospho-beta-D-ribosyl)-ATP + diphosphate = 5-phospho-alpha-D-ribose 1-diphosphate + ATP. It functions in the pathway amino-acid biosynthesis; L-histidine biosynthesis; L-histidine from 5-phospho-alpha-D-ribose 1-diphosphate: step 1/9. Catalyzes the condensation of ATP and 5-phosphoribose 1-diphosphate to form N'-(5'-phosphoribosyl)-ATP (PR-ATP). Has a crucial role in the pathway because the rate of histidine biosynthesis seems to be controlled primarily by regulation of HisG enzymatic activity. The protein is ATP phosphoribosyltransferase of Anaeromyxobacter sp. (strain K).